The primary structure comprises 546 residues: Chaperonin GroEL (546 aa).

Residues 30–33 (TLGP), Lys51, 87–91 (DGTTT), Gly415, 479–481 (NAA), and Asp495 each bind ATP. A disordered region spans residues 527-546 (DESAAPAMPGGMGGMGDMGM). The span at 536 to 546 (GGMGGMGDMGM) shows a compositional bias: gly residues.

It belongs to the chaperonin (HSP60) family. As to quaternary structure, forms a cylinder of 14 subunits composed of two heptameric rings stacked back-to-back. Interacts with the co-chaperonin GroES.

Its subcellular location is the cytoplasm. It catalyses the reaction ATP + H2O + a folded polypeptide = ADP + phosphate + an unfolded polypeptide.. Its function is as follows. Together with its co-chaperonin GroES, plays an essential role in assisting protein folding. The GroEL-GroES system forms a nano-cage that allows encapsulation of the non-native substrate proteins and provides a physical environment optimized to promote and accelerate protein folding. The chain is Chaperonin GroEL from Acidovorax sp. (strain JS42).